Here is a 377-residue protein sequence, read N- to C-terminus: Putrescine transport ATP-binding protein PotG (377 aa).

Residues 20–250 (LEIRNLTKSY…PTTRYSAEFI (231 aa)) form the ABC transporter domain. 52–59 (GASGCGKS) is a binding site for ATP.

It belongs to the ABC transporter superfamily. In terms of assembly, the complex is composed of two ATP-binding proteins (PotG), two transmembrane proteins (PotH and PotI) and a solute-binding protein (PotF).

The protein localises to the cell inner membrane. It carries out the reaction putrescine(out) + ATP + H2O = putrescine(in) + ADP + phosphate + H(+). With respect to regulation, transport is feedback inhibited by intracellular polyamines. Functionally, part of the ABC transporter complex PotFGHI involved in putrescine uptake. Responsible for energy coupling to the transport system. Imports putrescine for maintenance of the optimal concentration of polyamines necessary for cell growth in the presence of glucose. The polypeptide is Putrescine transport ATP-binding protein PotG (Escherichia coli (strain K12)).